Here is a 348-residue protein sequence, read N- to C-terminus: Protein RecA (348 aa).

67-74 (GPESSGKT) provides a ligand contact to ATP.

Belongs to the RecA family.

The protein localises to the cytoplasm. Its function is as follows. Can catalyze the hydrolysis of ATP in the presence of single-stranded DNA, the ATP-dependent uptake of single-stranded DNA by duplex DNA, and the ATP-dependent hybridization of homologous single-stranded DNAs. It interacts with LexA causing its activation and leading to its autocatalytic cleavage. The sequence is that of Protein RecA from Cutibacterium acnes (Propionibacterium acnes).